We begin with the raw amino-acid sequence, 83 residues long: Gas vesicle protein G (83 aa).

Belongs to the gas vesicle GvpG family. As to quaternary structure, gvpF to GvpM interact with each other in vitro, and may form multi-subunit complex(es).

The protein localises to the gas vesicle. In terms of biological role, proteins GvpF to GvpM might be involved in nucleating gas vesicle formation. A minor component of the gas vesicle. Gas vesicles are hollow, gas filled proteinaceous nanostructures found in some microorganisms. They allow positioning of halobacteria at the optimal depth for growth in the poorly aerated, shallow brine pools of their habitat. Expression of a 9.5 kb mc-vac DNA fragment containing 2 divergently transcribed regions (gvpD-gvpE-gvpF-gvpG-gvpH-gvpI-gvpJ-gvpK-gvpL-gvpM and gvpA-gvpC-gvpN-gvpO) allows H.volcanii to produce gas vesicles. This chain is Gas vesicle protein G, found in Haloferax mediterranei (strain ATCC 33500 / DSM 1411 / JCM 8866 / NBRC 14739 / NCIMB 2177 / R-4) (Halobacterium mediterranei).